We begin with the raw amino-acid sequence, 724 residues long: Actin-related protein 5 (724 aa).

Disordered stretches follow at residues 358 to 391 (QSLR…LMNV), 412 to 450 (TTAE…ESYL), and 467 to 488 (KKRL…IGRG). A compositionally biased stretch (basic and acidic residues) spans 414 to 446 (AEGRLRARQKRNEEELEKEKRNQLEEERRRENP). A Phosphoserine modification is found at serine 542.

It belongs to the actin family. ARP5 subfamily. Component of the INO80 chromatin-remodeling complex. Interacts with EEN. As to expression, expressed ubiquitously in seedlings, roots, leaves, buds, flowers and siliques.

The protein localises to the nucleus. It is found in the nucleoplasm. Its subcellular location is the cytoplasm. Functionally, probable subunit of a chromatin-remodeling complex. Involved in DNA repair. Required for multicellular development of all organs. The protein is Actin-related protein 5 of Arabidopsis thaliana (Mouse-ear cress).